We begin with the raw amino-acid sequence, 245 residues long: Zinc finger CCCH domain-containing protein 54 (245 aa).

Residues 92-119 (TYCAVACPAFRNGACHRGDSCEFAHGVF) form a C3H1-type zinc finger. The segment at 175 to 204 (GNGDGVTMRMDDEGYDTSRSPVRSGKDDLD) is disordered.

As to quaternary structure, interacts with MARD1/FLZ9 and RD21A. As to expression, specifically expressed in embryo (at protein level).

The protein localises to the nucleus. Its function is as follows. Embryo-specific transcription factor required at the globular to heart stage transition in embryo development. In Arabidopsis thaliana (Mouse-ear cress), this protein is Zinc finger CCCH domain-containing protein 54.